The sequence spans 102 residues: Small ribosomal subunit protein uS10 (102 aa).

The protein belongs to the universal ribosomal protein uS10 family. Part of the 30S ribosomal subunit.

Its function is as follows. Involved in the binding of tRNA to the ribosomes. The polypeptide is Small ribosomal subunit protein uS10 (Pelobacter propionicus (strain DSM 2379 / NBRC 103807 / OttBd1)).